The primary structure comprises 290 residues: Endoplasmic reticulum-Golgi intermediate compartment protein 1 (290 aa).

Over 1–27 (MSFDVRRFDIYRKVPKDLTQPTYTGAF) the chain is Cytoplasmic. The helical transmembrane segment at 28–48 (ISICCCVFMLFLFLSELTGFI) threads the bilayer. The Lumenal portion of the chain corresponds to 49-254 (ATEIVNELYV…RRRPFYRFIT (206 aa)). N-linked (GlcNAc...) asparagine glycosylation occurs at Asn-74. A helical membrane pass occupies residues 255-275 (TICAIIGGTFTVAGIIDSCIF). Over 276-290 (TASEAWKKIQIGKMS) the chain is Cytoplasmic.

The protein belongs to the ERGIC family.

The protein localises to the endoplasmic reticulum membrane. It localises to the endoplasmic reticulum-Golgi intermediate compartment membrane. The protein resides in the golgi apparatus membrane. Its function is as follows. Possible role in transport between endoplasmic reticulum and Golgi. The sequence is that of Endoplasmic reticulum-Golgi intermediate compartment protein 1 (ergic1) from Danio rerio (Zebrafish).